The primary structure comprises 872 residues: Alanine--tRNA ligase (872 aa).

Zn(2+) is bound by residues His567, His571, Cys669, and His673.

The protein belongs to the class-II aminoacyl-tRNA synthetase family. It depends on Zn(2+) as a cofactor.

It localises to the cytoplasm. It catalyses the reaction tRNA(Ala) + L-alanine + ATP = L-alanyl-tRNA(Ala) + AMP + diphosphate. Functionally, catalyzes the attachment of alanine to tRNA(Ala) in a two-step reaction: alanine is first activated by ATP to form Ala-AMP and then transferred to the acceptor end of tRNA(Ala). Also edits incorrectly charged Ser-tRNA(Ala) and Gly-tRNA(Ala) via its editing domain. This is Alanine--tRNA ligase from Streptococcus pneumoniae (strain Hungary19A-6).